We begin with the raw amino-acid sequence, 95 residues long: MLKSNNASETAAHKVGDKTAKKVFFRRRKGCPLSVPNAPVIDYKNPELLIKFVSEGGRMLPSRITNVCAKKQRKLNNAIKIARILALLPFVFQAK.

It belongs to the bacterial ribosomal protein bS18 family. As to quaternary structure, part of the 30S ribosomal subunit. Forms a tight heterodimer with protein bS6.

In terms of biological role, binds as a heterodimer with protein bS6 to the central domain of the 16S rRNA, where it helps stabilize the platform of the 30S subunit. This is Small ribosomal subunit protein bS18 from Rickettsia rickettsii (strain Sheila Smith).